Here is a 72-residue protein sequence, read N- to C-terminus: Translation initiation factor IF-1 (72 aa).

The 72-residue stretch at Met-1–Lys-72 folds into the S1-like domain.

Belongs to the IF-1 family. Component of the 30S ribosomal translation pre-initiation complex which assembles on the 30S ribosome in the order IF-2 and IF-3, IF-1 and N-formylmethionyl-tRNA(fMet); mRNA recruitment can occur at any time during PIC assembly.

The protein resides in the cytoplasm. One of the essential components for the initiation of protein synthesis. Stabilizes the binding of IF-2 and IF-3 on the 30S subunit to which N-formylmethionyl-tRNA(fMet) subsequently binds. Helps modulate mRNA selection, yielding the 30S pre-initiation complex (PIC). Upon addition of the 50S ribosomal subunit IF-1, IF-2 and IF-3 are released leaving the mature 70S translation initiation complex. The chain is Translation initiation factor IF-1 from Xylella fastidiosa (strain Temecula1 / ATCC 700964).